A 393-amino-acid chain; its full sequence is 1-deoxy-D-xylulose 5-phosphate reductoisomerase (393 aa).

Residues threonine 16, glycine 17, serine 18, isoleucine 19, alanine 42, arginine 43, asparagine 44, and asparagine 127 each coordinate NADPH. Lysine 128 is a 1-deoxy-D-xylulose 5-phosphate binding site. NADPH is bound at residue glutamate 129. Aspartate 153 lines the Mn(2+) pocket. Residues serine 154, glutamate 155, serine 179, and histidine 202 each contribute to the 1-deoxy-D-xylulose 5-phosphate site. Residue glutamate 155 coordinates Mn(2+). Glycine 208 is a binding site for NADPH. Positions 215, 220, 221, and 224 each coordinate 1-deoxy-D-xylulose 5-phosphate. Glutamate 224 is a binding site for Mn(2+).

The protein belongs to the DXR family. It depends on Mg(2+) as a cofactor. Mn(2+) serves as cofactor.

The catalysed reaction is 2-C-methyl-D-erythritol 4-phosphate + NADP(+) = 1-deoxy-D-xylulose 5-phosphate + NADPH + H(+). It functions in the pathway isoprenoid biosynthesis; isopentenyl diphosphate biosynthesis via DXP pathway; isopentenyl diphosphate from 1-deoxy-D-xylulose 5-phosphate: step 1/6. Its function is as follows. Catalyzes the NADPH-dependent rearrangement and reduction of 1-deoxy-D-xylulose-5-phosphate (DXP) to 2-C-methyl-D-erythritol 4-phosphate (MEP). This is 1-deoxy-D-xylulose 5-phosphate reductoisomerase from Jannaschia sp. (strain CCS1).